The primary structure comprises 258 residues: 5'-nucleotidase SurE (258 aa).

Aspartate 8, aspartate 9, serine 40, and asparagine 98 together coordinate a divalent metal cation.

It belongs to the SurE nucleotidase family. The cofactor is a divalent metal cation.

The protein resides in the cytoplasm. It carries out the reaction a ribonucleoside 5'-phosphate + H2O = a ribonucleoside + phosphate. Its function is as follows. Nucleotidase that shows phosphatase activity on nucleoside 5'-monophosphates. This Synechococcus elongatus (strain ATCC 33912 / PCC 7942 / FACHB-805) (Anacystis nidulans R2) protein is 5'-nucleotidase SurE.